We begin with the raw amino-acid sequence, 502 residues long: ATP-dependent DNA helicase uvsW (502 aa).

The Helicase ATP-binding domain occupies 122–280 (VFEGLVNRRR…QYVGMFGEIF (159 aa)). 135 to 142 (LPTSAGKS) lines the ATP pocket. The DEAH box signature appears at 232 to 235 (DECH). In terms of domain architecture, Helicase C-terminal spans 335–501 (WIAKLAIKLA…KFNYVMKTVN (167 aa)).

Probably interacts with UvsW.1. Interacts with gp32. Requires Mg(2+) as cofactor.

The catalysed reaction is Couples ATP hydrolysis with the unwinding of duplex DNA by translocating in the 3'-5' direction.. It carries out the reaction ATP + H2O = ADP + phosphate + H(+). With respect to regulation, unwinding activity is strongly stimulated by single-stranded binding protein gp32, the ssDNA annealing activity is partially inhibited by gp32 and strongly inhibited by ATP-gamma-S. Another study did not find gp32 stimulation of helicase activity. Holliday junction (HJ) branch migration is inhibited by ATP-gamma-S. In terms of biological role, plays important roles in recombination-dependent DNA repair and the reorganization of stalled replication forks during viral DNA synthesis. Active on in vivo-derived T4 DNA; viral DNA is highly modified by hydroxymethylation and glucosylation of cytosine residues. Helps process Holliday junction (HJ) intermediates to mature products by catalyzing branch migration. Probably able to catalyze replication fork regression. Unwinds HJ and Y-branched but not linear double-stranded (ds)DNA; unwinding requires ATP and Mg(2+). Unwinds dsDNA with a 3'-single-stranded (ss)DNA overhang, suggesting it is a 3'-5' helicase. Another study does not find this activity. Unwinds D- and R-loops. Also anneals ssDNA; ATP stimulates annealing. Has ssDNA and dsDNA-stimulated ATPase activity, also hydrolyzes GTP in the presence of DNA. The protein is ATP-dependent DNA helicase uvsW of Enterobacteria phage T4 (Bacteriophage T4).